We begin with the raw amino-acid sequence, 401 residues long: Probable [pyruvate dehydrogenase (acetyl-transferring)] kinase, mitochondrial (401 aa).

Residues 131-360 (LIELRESDGV…DACIYLKAVP (230 aa)) enclose the Histidine kinase domain. ATP is bound by residues 247–254 (ELFKNAMR), Asp286, 305–306 (ST), and 321–326 (GYGYGL).

It belongs to the PDK/BCKDK protein kinase family.

The protein resides in the mitochondrion matrix. It carries out the reaction L-seryl-[pyruvate dehydrogenase E1 alpha subunit] + ATP = O-phospho-L-seryl-[pyruvate dehydrogenase E1 alpha subunit] + ADP + H(+). Inhibits the mitochondrial pyruvate dehydrogenase complex by phosphorylation of the E1 alpha subunit, thus contributing to the regulation of glucose metabolism. Required for normal lifespan. In Caenorhabditis elegans, this protein is Probable [pyruvate dehydrogenase (acetyl-transferring)] kinase, mitochondrial (pdhk-2).